A 119-amino-acid chain; its full sequence is Hemerythrin subunit A (119 aa).

Positions 26, 55, 59, 74, 78, 107, and 112 each coordinate Fe cation.

The protein belongs to the hemerythrin family.

In terms of biological role, hemerythrin is a respiratory protein in blood cells of certain marine worms. The oxygen-binding site in each chain contains two iron atoms. In Sipunculus nudus (Sipunculan worm), this protein is Hemerythrin subunit A.